A 565-amino-acid polypeptide reads, in one-letter code: Membrane protein insertase YidC (565 aa).

Helical transmembrane passes span 6–26 (VLLIFSWLTVATLLWMDWGKN), 348–368 (LMALIGQGLFWILSHLNSLLH), 370–390 (WGWAIVGLVVLLRIAMYPLSA), 437–457 (GGCFPILIQMPIFFALYWVLV), 479–499 (PYFILPLLNIVIMWATQKLTP), and 516–536 (PLIFGVMMAFVPSGLALYWVI).

The protein belongs to the OXA1/ALB3/YidC family. Type 1 subfamily. In terms of assembly, interacts with the Sec translocase complex via SecD. Specifically interacts with transmembrane segments of nascent integral membrane proteins during membrane integration.

Its subcellular location is the cell inner membrane. Its function is as follows. Required for the insertion and/or proper folding and/or complex formation of integral membrane proteins into the membrane. Involved in integration of membrane proteins that insert both dependently and independently of the Sec translocase complex, as well as at least some lipoproteins. Aids folding of multispanning membrane proteins. The protein is Membrane protein insertase YidC of Xylella fastidiosa (strain M12).